Consider the following 122-residue polypeptide: Small ribosomal subunit protein uS13 (122 aa).

A disordered region spans residues 97-122 (PVRGQRTHTNARTRKGPAKAIAGKKK).

It belongs to the universal ribosomal protein uS13 family. As to quaternary structure, part of the 30S ribosomal subunit. Forms a loose heterodimer with protein S19. Forms two bridges to the 50S subunit in the 70S ribosome.

Located at the top of the head of the 30S subunit, it contacts several helices of the 16S rRNA. In the 70S ribosome it contacts the 23S rRNA (bridge B1a) and protein L5 of the 50S subunit (bridge B1b), connecting the 2 subunits; these bridges are implicated in subunit movement. Contacts the tRNAs in the A and P-sites. This is Small ribosomal subunit protein uS13 from Brucella abortus (strain S19).